The following is a 183-amino-acid chain: UPF0398 protein BLi02355/BL05236 (183 aa).

This sequence belongs to the UPF0398 family.

The polypeptide is UPF0398 protein BLi02355/BL05236 (Bacillus licheniformis (strain ATCC 14580 / DSM 13 / JCM 2505 / CCUG 7422 / NBRC 12200 / NCIMB 9375 / NCTC 10341 / NRRL NRS-1264 / Gibson 46)).